We begin with the raw amino-acid sequence, 478 residues long: Transposase for insertion sequence element IS231C (478 aa).

It belongs to the transposase 11 family.

Involved in the transposition of the insertion sequence. The polypeptide is Transposase for insertion sequence element IS231C (Bacillus thuringiensis subsp. berliner).